Reading from the N-terminus, the 83-residue chain is Small ribosomal subunit protein uS15c (83 aa).

Belongs to the universal ribosomal protein uS15 family. In terms of assembly, part of the 30S ribosomal subunit.

The protein localises to the plastid. It is found in the chloroplast. This chain is Small ribosomal subunit protein uS15c (rps15), found in Fagopyrum esculentum subsp. ancestrale (Wild buckwheat).